The primary structure comprises 807 residues: MRLSPVLLRLSRGPALLALALPLAVALAFSDETLDKVPKSEGYCSRILRVQGTRREGYTEFSLRVEGDPDFYKPGTSYRVTLSAAPPSYFRGFTLIALKENREGDKEEDHAGTFQIIDEEETQFMSNCPVAVTESTPRRRTRIQVFWIAPPAGTGCVILKASIVQKRIIYFQDEGSLTKKLCEQDSTFDGVTDKPILDCCACGTAKYRLTFYGNWSEKTHPKDYPRRANHWSAIIGGSHSKNYVLWEYGGYASEGVKQVAELGSPVKMEEEIRQQSDEVLTVIKAKAQWPAWQPLNVRAAPSAEFSVDRTRHLMSFLTMMGPSPDWNVGLSAEDLCTKECGWVQKVVQDLIPWDAGTDSGVTYESPNKPTIPQEKIRPLTSLDHPQSPFYDPEGGSITQVARVVIERIARKGEQCNIVPDNVDDIVADLAPEEKDEDDTPETCIYSNWSPWSACSSSTCDKGKRMRQRMLKAQLDLSVPCPDTQDFQPCMGPGCSDEDGSTCTMSEWITWSPCSISCGTGTRSRERYVKQFPEDGSVCTLPTEETEKCTVNEECSPSSCLTTEWGEWDECSATCGMGMKKRHRMVKMSPADGSMCKAETSQAEKCMMPECHTIPCLLSLWSEWSDCSVTCGKGMRTRQRMLKSLAELGDCNEELEQVEKCMLPECPIDCELTEWSQWSECNKSCGKGHMIRTRMIQMEPQFGGTPCPETVQRKKCRIRKCLRNPSIQNLRWREARESRRSEQLREESDGDQFPGCRMRPWTAWSECTKLCGGGIQERYMTVKKRFKSSQFTSCKDKKEIRACNVHPC.

An N-terminal signal peptide occupies residues M1–A28. The region spanning F29 to K194 is the Reelin domain. Disulfide bonds link C44–C128, C156–C182, C199–C336, C200–C340, C202–C415, C443–C480, C454–C489, C459–C494, C502–C538, C513–C517, C548–C554, C559–C595, C570–C574, C605–C610, C615–C650, C626–C630, and C660–C665. The region spanning P195 to P388 is the Spondin domain. N214 carries an N-linked (GlcNAc...) asparagine glycan. 3 residues coordinate Ca(2+): D325, D354, and D358. 6 consecutive TSP type-1 domains span residues T442–S495, T501–S555, S558–H611, P614–P666, D668–L721, and G754–P806. N681 carries an N-linked (GlcNAc...) asparagine glycan.

As to quaternary structure, binds to the central extracellular domain of APP and inhibits beta-secretase cleavage of APP.

The protein localises to the secreted. Its subcellular location is the extracellular space. It is found in the extracellular matrix. Functionally, cell adhesion protein that promotes the attachment of spinal cord and sensory neuron cells and the outgrowth of neurites in vitro. May contribute to the growth and guidance of axons in both the spinal cord and the PNS. Major factor for vascular smooth muscle cell. This Bos taurus (Bovine) protein is Spondin-1 (SPON1).